The chain runs to 342 residues: Erlin-1 (342 aa).

Residues 1-6 are Cytoplasmic-facing; sequence MAHVGA. The helical transmembrane segment at 7-23 threads the bilayer; that stretch reads VVAAMAGLMAILLHSSI. The Lumenal portion of the chain corresponds to 24 to 342; sequence HKIEEGHLAV…ASKPKASEGH (319 aa). N106 is a glycosylation site (N-linked (GlcNAc...) asparagine). The disordered stretch occupies residues 308 to 342; sequence SSASRPAAGESEQLESLSMRESLKKASKPKASEGH.

Belongs to the band 7/mec-2 family.

It localises to the endoplasmic reticulum membrane. Its function is as follows. Mediates the endoplasmic reticulum-associated degradation (ERAD) of inositol 1,4,5-trisphosphate receptors (IP3Rs). Involved in regulation of cellular cholesterol homeostasis by regulation the SREBP signaling pathway. Binds cholesterol and may promote ER retention of the SCAP-SREBF complex. This Danio rerio (Zebrafish) protein is Erlin-1.